We begin with the raw amino-acid sequence, 308 residues long: Nodulation protein D 1 (308 aa).

One can recognise an HTH lysR-type domain in the interval 6-63; that stretch reads LDLNLLVALDALMTERNLTAAARSINLSQPAMSAAVGRLRVYFEDELFTMNGRELVLT. A DNA-binding region (H-T-H motif) is located at residues 23-42; it reads LTAAARSINLSQPAMSAAVG.

It belongs to the LysR transcriptional regulatory family.

In terms of biological role, nodD regulates the expression of the nodABCFE genes which encode other nodulation proteins. NodD is also a negative regulator of its own expression. Binds flavonoids as inducers. The protein is Nodulation protein D 1 (nodD1) of Rhizobium tropici.